The following is a 215-amino-acid chain: 3-isopropylmalate dehydratase small subunit (215 aa).

It belongs to the LeuD family. LeuD type 1 subfamily. Heterodimer of LeuC and LeuD.

It carries out the reaction (2R,3S)-3-isopropylmalate = (2S)-2-isopropylmalate. It participates in amino-acid biosynthesis; L-leucine biosynthesis; L-leucine from 3-methyl-2-oxobutanoate: step 2/4. In terms of biological role, catalyzes the isomerization between 2-isopropylmalate and 3-isopropylmalate, via the formation of 2-isopropylmaleate. The protein is 3-isopropylmalate dehydratase small subunit of Polynucleobacter asymbioticus (strain DSM 18221 / CIP 109841 / QLW-P1DMWA-1) (Polynucleobacter necessarius subsp. asymbioticus).